We begin with the raw amino-acid sequence, 101 residues long: Small ribosomal subunit protein uS14 (101 aa).

The protein belongs to the universal ribosomal protein uS14 family. As to quaternary structure, part of the 30S ribosomal subunit. Contacts proteins S3 and S10.

Functionally, binds 16S rRNA, required for the assembly of 30S particles and may also be responsible for determining the conformation of the 16S rRNA at the A site. This is Small ribosomal subunit protein uS14 from Vesicomyosocius okutanii subsp. Calyptogena okutanii (strain HA).